A 431-amino-acid polypeptide reads, in one-letter code: Polyprenol-phosphate-mannose-dependent alpha-(1-2)-phosphatidylinositol pentamannoside mannosyltransferase (431 aa).

10 consecutive transmembrane segments (helical) span residues 43–63 (AAVL…YLAP), 108–128 (FAAV…ALLW), 148–168 (GGTA…AIWI), 175–195 (FDYG…VYTP), 202–222 (LLVG…VYLV), 229–249 (AAAF…LVVG), 290–310 (GFGP…ILAW), 332–352 (LSPI…IWLI), 364–384 (ILGW…LSFA), and 397–417 (LAWA…WIAA).

The protein belongs to the glycosyltransferase 87 family.

It is found in the cell membrane. It functions in the pathway phospholipid metabolism; phosphatidylinositol metabolism. Its function is as follows. Catalyzes the alpha-1,2 addition of a mannose residue from polyprenol-phosphate-mannose (PPM) to a monoacyl phosphatidylinositol tetramannoside (AcPIM4) to generate a monoacyl phosphatidylinositol pentamannoside (AcPIM5). The protein is Polyprenol-phosphate-mannose-dependent alpha-(1-2)-phosphatidylinositol pentamannoside mannosyltransferase (pimE) of Mycobacterium tuberculosis (strain CDC 1551 / Oshkosh).